A 342-amino-acid chain; its full sequence is Thiosulfate/3-mercaptopyruvate sulfurtransferase 2 (342 aa).

2 Rhodanese domains span residues 56–173 and 224–338; these read GDAD…DVES and EDKT…LPIV. Cysteine 298 functions as the Cysteine persulfide intermediate in the catalytic mechanism.

Expressed in roots, rosette and cauline leaves, stems, flowers and siliques.

The protein localises to the cytoplasm. It carries out the reaction thiosulfate + hydrogen cyanide = thiocyanate + sulfite + 2 H(+). It catalyses the reaction 2-oxo-3-sulfanylpropanoate + [thioredoxin]-dithiol = [thioredoxin]-disulfide + hydrogen sulfide + pyruvate + H(+). Catalyzes the transfer of a sulfur ion from a donor to cyanide or to other thiol compounds. Substrate preference is 3-mercaptopyruvate &gt; thiosulfate. Involved in embryo and seed development. The polypeptide is Thiosulfate/3-mercaptopyruvate sulfurtransferase 2 (STR2) (Arabidopsis thaliana (Mouse-ear cress)).